The following is a 609-amino-acid chain: Glutamine--fructose-6-phosphate aminotransferase [isomerizing] (609 aa).

The active-site Nucleophile; for GATase activity is the Cys-2. Residues 2–219 (CGIFGYIGAK…SGELAVVGLG (218 aa)) enclose the Glutamine amidotransferase type-2 domain. SIS domains follow at residues 280-426 (ISEK…LKQT) and 458-599 (WAND…IDRP). Lys-604 functions as the For Fru-6P isomerization activity in the catalytic mechanism.

As to quaternary structure, homodimer.

The protein localises to the cytoplasm. It carries out the reaction D-fructose 6-phosphate + L-glutamine = D-glucosamine 6-phosphate + L-glutamate. In terms of biological role, catalyzes the first step in hexosamine metabolism, converting fructose-6P into glucosamine-6P using glutamine as a nitrogen source. The chain is Glutamine--fructose-6-phosphate aminotransferase [isomerizing] from Chlamydia caviae (strain ATCC VR-813 / DSM 19441 / 03DC25 / GPIC) (Chlamydophila caviae).